Consider the following 385-residue polypeptide: HAT1-interacting factor 1 (385 aa).

The interval 80-199 is important for interaction with heterotetrameric histone H3 and H4 and for interaction with dimeric histone H2A and H2B; it reads GNLFGDALLA…RKSGFHIYFE (120 aa). Composition is skewed to low complexity over residues 85-97 and 105-116; these read DALLAGDDGSGSE and DVSNGEEGNENG. The disordered stretch occupies residues 85-163; it reads DALLAGDDGS…EEENVEKEEE (79 aa). Over residues 129-160 the composition is skewed to acidic residues; sequence DQEEEDLTGDVDSGDSEDSGEGSEEEEENVEK. Phosphoserine is present on S174. TPR repeat units follow at residues 186–220, 229–262, and 289–322; these read VSQLRKSGFHIYFENDLYENALDLLAQALMLLGRP, ENSRLRIGDVYILMGDIEREAEMFSRAIHHYLKA, and ALRWVDQVPAKDKLKRFKHAKALLEKHMTTRPKD. The tract at residues 248 to 332 is interaction with dimeric histone H2A and H2B; the sequence is EAEMFSRAIH…SELQQARLAQ (85 aa). Residues 340–385 form a disordered region; the sequence is VQENQQHGSKRPLSQPTTSIGFPALEKPLGDFNDLSQLVKKKPRRH. Over residues 342 to 359 the composition is skewed to polar residues; the sequence is ENQQHGSKRPLSQPTTSI.

This sequence belongs to the NASP family. In terms of assembly, homodimer. The homodimer interacts with a histone tetramer containing H3 and H4; the interaction is direct. The homodimer interacts with heterodimeric histone H2A and H2B; the interaction is direct. Component of the nuclear histone acetyltransferase B (HAT-B) complex composed of at least HAT1, HAT2 and HIF1. Does not interact with HAT1 in the absence of HAT2. Interacts with histones H3 and H4 in a HAT1/HAT2 dependent manner. Interaction with heterotetrameric histone H3 and H4 precludes interaction with dimeric histone H2A and H2B, irrespective of the fact that their binding involves non-identical regions of the protein.

The protein localises to the nucleus. Its function is as follows. Histone H3 and H4 specific chaperone component of the nuclear histone acetyltransferase B (HAT-B) complex. Involved in chromatin assembly and telomere silencing. In Saccharomyces cerevisiae (strain ATCC 204508 / S288c) (Baker's yeast), this protein is HAT1-interacting factor 1 (HIF1).